The following is a 319-amino-acid chain: Cell division protein FtsN (319 aa).

Residues 1–30 (MAQRDYVRRSQPAPSRRKKSTSRKKQRNLP) form a disordered region. Topologically, residues 1 to 33 (MAQRDYVRRSQPAPSRRKKSTSRKKQRNLPAVS) are cytoplasmic. Residues 4 to 6 (RDY) form a mediates interaction with FtsA region. Over residues 15-27 (SRRKKSTSRKKQR) the composition is skewed to basic residues. The helical transmembrane segment at 34–54 (PAMVAIAAAVLVTFIGGLYFI) threads the bilayer. Over 55 to 319 (THHKKEESET…TNCIRLAAGG (265 aa)) the chain is Periplasmic. Disordered regions lie at residues 60-79 (EESE…PPKP) and 89-113 (LESR…TPEQ). 4 repeat units span residues 115–120 (TPEQRQ), 145–150 (TPEQRQ), 197–200 (QSKP), and 220–223 (QSKP). The 2 X 6 AA repeats stretch occupies residues 115-150 (TPEQRQLLEQMQADMRQQPTQLVEVPWNEQTPEQRQ). The segment at 140-245 (PWNEQTPEQR…PKPTAEKKDE (106 aa)) is disordered. The segment covering 143 to 171 (EQTPEQRQQTLQRQRQAQQLAEQQRLAQQ) has biased composition (low complexity). A compositionally biased stretch (polar residues) spans 172-221 (SRTTEQSWQQQTRTSQAAPVQAQPRQSKPASSQQPYQDLLQTPAHTTAQS). The interval 197 to 223 (QSKPASSQQPYQDLLQTPAHTTAQSKP) is 2 X 4 AA repeats. A compositionally biased stretch (low complexity) spans 222–238 (KPQQAAPVARAADAPKP). The 75-residue stretch at 242-316 (KKDERRWMVQ…AGHTNCIRLA (75 aa)) folds into the SPOR domain. A disulfide bridge links cysteine 252 with cysteine 312.

Belongs to the FtsN family. As to quaternary structure, interacts with FtsA via its N-terminal cytoplasmic domain. Interacts with ZapA, FtsQ, FtsW and FtsI.

The protein resides in the cell inner membrane. Essential cell division protein that activates septal peptidoglycan synthesis and constriction of the cell. Acts on both sides of the membrane, via interaction with FtsA in the cytoplasm and interaction with the FtsQBL complex in the periplasm. These interactions may induce a conformational switch in both FtsA and FtsQBL, leading to septal peptidoglycan synthesis by FtsI and associated synthases. Required for full FtsI activity. Required for recruitment of AmiC to the septal ring. In Escherichia coli (strain K12), this protein is Cell division protein FtsN.